Consider the following 241-residue polypeptide: Tetrahydromethanopterin S-methyltransferase subunit A (241 aa).

Residues 1–220 (MANKREPAPG…AKWQAGYYNG (220 aa)) lie on the Cytoplasmic side of the membrane. His85 serves as a coordination point for 5-hydroxybenzimidazolylcob(I)amide. A helical transmembrane segment spans residues 221-241 (KIQGIATGLFLMLLIMGILMF).

Belongs to the MtrA family. As to quaternary structure, the complex is composed of 8 subunits; MtrA, MtrB, MtrC, MtrD, MtrE, MtrF, MtrG and MtrH. 5-hydroxybenzimidazolylcob(I)amide serves as cofactor.

It is found in the cell membrane. The enzyme catalyses 5-methyl-5,6,7,8-tetrahydromethanopterin + coenzyme M + 2 Na(+)(in) = 5,6,7,8-tetrahydromethanopterin + methyl-coenzyme M + 2 Na(+)(out). The protein operates within one-carbon metabolism; methanogenesis from CO(2); methyl-coenzyme M from 5,10-methylene-5,6,7,8-tetrahydromethanopterin: step 2/2. Its function is as follows. Part of a complex that catalyzes the formation of methyl-coenzyme M and tetrahydromethanopterin from coenzyme M and methyl-tetrahydromethanopterin. This is an energy-conserving, sodium-ion translocating step. This is Tetrahydromethanopterin S-methyltransferase subunit A from Methanocaldococcus jannaschii (strain ATCC 43067 / DSM 2661 / JAL-1 / JCM 10045 / NBRC 100440) (Methanococcus jannaschii).